Here is a 103-residue protein sequence, read N- to C-terminus: Large ribosomal subunit protein bL21 (103 aa).

This sequence belongs to the bacterial ribosomal protein bL21 family. As to quaternary structure, part of the 50S ribosomal subunit. Contacts protein L20.

In terms of biological role, this protein binds to 23S rRNA in the presence of protein L20. The chain is Large ribosomal subunit protein bL21 from Polaromonas sp. (strain JS666 / ATCC BAA-500).